A 1453-amino-acid polypeptide reads, in one-letter code: MLGRDEDLVRTMSGRGSLGSTSHRSLAGAASKSFRDVFAPPTDDVFGRSDRREEDDVELRWAALERLPTYDRLRKGMLPQTMVNGKIGLEDVDVTNLAPKEKKHLMEMILKFVEEDNEKFLRRLRERTDRVGIEVPKIEVRYENLSVEGDVRSASRALPTLFNVTLNTIESILGLFHLLPSKKRKIEILKDISGIIKPSRMTLLLGPPSSGKTTLLQALAGKLDDTLQMSGRITYCGHEFREFVPQKTCAYISQHDLHFGEMTVRESLDFSGRCLGVGTRYQLLTELSRREREAGIKPDPEIDAFMKSIAISGQETSLVTDYVLKLLGLDICADTLVGDVMRRGISGGQRKRLTTGEMLVGPATALFMDEISTGLDSSTTFQICKFMRQLVHIADVTMVISLLQPAPETFELFDDIILLSEGQIVYQGSRDNVLEFFEYMGFKCPERKGIADFLQEVTSKKDQEQYWNRREHPYSYVSVHDFSSGFNSFHAGQQLASEFRVPYDKAKTHPAALVTQKYGISNKDLFKACFDREWLLMKRNSFVYVFKTVQITIMSLIAMTVYFRTEMHVGTVQDGQKFYGALFFSLINLMFNGMAELAFTVMRLPVFFKQRDFLFYPPWAFALPGFLLKIPLSLIESVIWIALTYYTIGFAPSAARFFRQLLAYFCVNQMALSLFRFLGALGRTEVIANSGGTLALLVVFVLGGFIISKDDIPSWLTWCYYTSPMMYGQTALVINEFLDERWGSPNNDTRINAKTVGEVLLKSRGFFTEPYWFWICIGALLGFTVLFNFCYIIALMYLNPLGNSKATTVVEEGKDKHKGSHSGTGGSVVELTSTSSHGPKKGMVLPFQPLSLAFNNVNYYVDMPAEMKAQGVEGDRLQLLRDVGGAFRPGVLTALVGVSGAGKTTLMDVLAGRKTGGYVEGSINISGYPKNQATFARVSGYCEQNDIHSPHVTVYESLIYSAWLRLSADIDTKTREMFVEEVMELVELKPLRNSIVGLPGVDGLSTEQRKRLTIAVELVANPSIIFMDEPTSGLDARAAAIVMRTVRNTVDTGRTVVCTIHQPSIDIFESFDELLLMKRGGQVIYAGTLGHHSQKLVEYFEAIEGVPKIKDGYNPATWMLDVTTPSMESQMSVDFAQIFVNSSVNRRNQELIKELSTPPPGSNDLYFRTKYAQPFSTQTKACFWKMYWSNWRYPQYNAIRFLMTVVIGVLFGLLFWQTGTKIEKEQDLNNFFGAMYAAVLFLGATNAATVQPAVAIERTVFYREKAAGMYSAIPYAISQVAVEIMYNTIQTGVYTLILYSMIGYDWTVVKFFWFYYYMLTCFVYFTLYGMMLVALTPNYQIAGICLSFFLSFWNLFSGFLIPRPQIPIWWRWYYWASPVAWTLYGIITSQVGDRDSIVHITGVGDMSLKTLLKNGFGFDYDFLPVVAVVHIAWILIFLFAFAYGIKFLNFQRR.

Residues 1–24 (MLGRDEDLVRTMSGRGSLGSTSHR) form a disordered region. The region spanning 173–446 (LGLFHLLPSK…FEYMGFKCPE (274 aa)) is the ABC transporter 1 domain. 206–213 (GPPSSGKT) lines the ATP pocket. Positions 524–737 (DLFKACFDRE…GQTALVINEF (214 aa)) constitute an ABC transmembrane type-2 1 domain. 6 consecutive transmembrane segments (helical) span residues 542 to 562 (FVYV…MTVY), 582 to 602 (LFFS…FTVM), 621 to 641 (FALP…VIWI), 661 to 681 (LLAY…LGAL), 687 to 707 (IANS…GFII), and 773 to 793 (FWIC…CYII). An ABC transporter 2 domain is found at 852-1105 (LAFNNVNYYV…LVEYFEAIEG (254 aa)). 897–904 (GVSGAGKT) contributes to the ATP binding site. Residues 1177-1391 (TQTKACFWKM…TLYGIITSQV (215 aa)) form the ABC transmembrane type-2 2 domain. The next 7 helical transmembrane spans lie at 1196–1216 (YNAI…LLFW), 1230–1250 (NFFG…AATV), 1289–1309 (IQTG…WTVV), 1311–1331 (FFWF…YGMM), 1341–1361 (IAGI…GFLI), 1366–1386 (IPIW…LYGI), and 1422–1442 (FLPV…FAFA).

The protein belongs to the ABC transporter superfamily. ABCG family. PDR (TC 3.A.1.205) subfamily. Expressed in roots at low levels.

It localises to the membrane. Functionally, may be a general defense protein. This chain is ABC transporter G family member 34 (ABCG34), found in Arabidopsis thaliana (Mouse-ear cress).